Consider the following 62-residue polypeptide: Sperm protamine P1 (62 aa).

The disordered stretch occupies residues 1 to 62 (MARYRHSRSR…RYSRRRRRRY (62 aa)).

It belongs to the protamine P1 family. In terms of tissue distribution, testis.

The protein resides in the nucleus. The protein localises to the chromosome. Protamines substitute for histones in the chromatin of sperm during the haploid phase of spermatogenesis. They compact sperm DNA into a highly condensed, stable and inactive complex. The polypeptide is Sperm protamine P1 (PRM1) (Lagostrophus fasciatus (Banded hare-wallaby)).